A 301-amino-acid polypeptide reads, in one-letter code: Probable alpha-L-glutamate ligase (301 aa).

Residues 104-287 enclose the ATP-grasp domain; sequence LQLLSRKGIG…VAGIIIEYLE (184 aa). Residues lysine 141, 178 to 179, aspartate 187, and 211 to 213 contribute to the ATP site; these read EY and RSN. 3 residues coordinate Mg(2+): aspartate 248, glutamate 260, and asparagine 262. Mn(2+) is bound by residues aspartate 248, glutamate 260, and asparagine 262.

It belongs to the RimK family. The cofactor is Mg(2+). Mn(2+) is required as a cofactor.

The protein is Probable alpha-L-glutamate ligase of Azotobacter vinelandii (strain DJ / ATCC BAA-1303).